Reading from the N-terminus, the 94-residue chain is Large ribosomal subunit protein uL23 (94 aa).

This sequence belongs to the universal ribosomal protein uL23 family. As to quaternary structure, part of the 50S ribosomal subunit. Contacts protein L29, and trigger factor when it is bound to the ribosome.

Functionally, one of the early assembly proteins it binds 23S rRNA. One of the proteins that surrounds the polypeptide exit tunnel on the outside of the ribosome. Forms the main docking site for trigger factor binding to the ribosome. The sequence is that of Large ribosomal subunit protein uL23 from Phytoplasma australiense.